The sequence spans 238 residues: Tetraspanin-8 (238 aa).

Over 1–9 (MAGVNVCIK) the chain is Cytoplasmic. The chain crosses the membrane as a helical span at residues 10–33 (CSMFIFNFVFWLCGAIILSVAISI). At 34-57 (RAGKIGQEILAPGDADLNLFIAVN) the chain is on the extracellular side. A helical membrane pass occupies residues 58 to 72 (ILIFVGAVIMILGFL). Residues 73–83 (GCCGAMKENQF) lie on the Cytoplasmic side of the membrane. Residues 84-109 (MMILFFVGLLMILLLQVAAGIVATTR) traverse the membrane as a helical segment. Topologically, residues 110–206 (KSKTEQALNK…ASISQMFSKR (97 aa)) are extracellular. An N-linked (GlcNAc...) asparagine glycan is attached at N118. Residues 207–231 (LFIVLALAFGLAAIEVLGLIFSIVL) form a helical membrane-spanning segment. Over 232–238 (YCQMRKK) the chain is Cytoplasmic.

Belongs to the tetraspanin (TM4SF) family. As to quaternary structure, forms homooligomers. Interacts with MEP1B. Interacts with integrin alpha3/ITGA3. Interacts with RICTOR and MTOR. Interacts with ADAM17. Interacts with ECE1.

The protein localises to the cell membrane. Structural component of specialized membrane microdomains known as tetraspanin-enriched microdomains (TERMs), which act as platforms for receptor clustering and signaling. Participates thereby in diverse biological functions such as cell signal transduction, migration and protein trafficking. Promotes ADAM17-mediated TNF-alpha processing through recruitment of ADAM17 to tetraspanin-enriched micro-domains (TEMs). Forms a complex with RICTOR and integrin alpha3/ITGA3 to mediate mTORC2 activation and AKT1 phosphorylation leading to cell migration. Reduces apoptosis and autophagy induced by high glucose levels through forming a complex with mTOR and RICTOR. Contributes to the maintenance of intestinal epithelial barrier and plays a role in the regulation of intestine inflammation by switching interferon gamma receptor 1/IFNGR1 from clathrin-dependent to lipid raft-dependent endocytosis route to limit STAT1 activation magnitude and duration. Acts as a modulator of the endothelin axis by associating with endothelin converting enzyme ECE1 and regulating its activity of conversion of the endothelin-1 precursor to endothelin. In Bos taurus (Bovine), this protein is Tetraspanin-8 (TSPAN8).